The following is a 149-amino-acid chain: Nucleoside diphosphate kinase (149 aa).

ATP is bound by residues Lys9, Phe57, Arg85, Thr91, Arg102, and Asn112. Catalysis depends on His115, which acts as the Pros-phosphohistidine intermediate.

Belongs to the NDK family. In terms of assembly, homotetramer. Mg(2+) serves as cofactor.

The protein resides in the cytoplasm. The catalysed reaction is a 2'-deoxyribonucleoside 5'-diphosphate + ATP = a 2'-deoxyribonucleoside 5'-triphosphate + ADP. It catalyses the reaction a ribonucleoside 5'-diphosphate + ATP = a ribonucleoside 5'-triphosphate + ADP. Major role in the synthesis of nucleoside triphosphates other than ATP. The ATP gamma phosphate is transferred to the NDP beta phosphate via a ping-pong mechanism, using a phosphorylated active-site intermediate. The polypeptide is Nucleoside diphosphate kinase (Staphylococcus aureus (strain Mu3 / ATCC 700698)).